A 241-amino-acid chain; its full sequence is Orotidine 5'-phosphate decarboxylase (241 aa).

Substrate-binding positions include Asp18, Lys39, Asp66–Thr75, Thr130, Arg192, Gln201, Gly221, and Arg222. Residue Lys68 is the Proton donor of the active site.

This sequence belongs to the OMP decarboxylase family. Type 1 subfamily. Homodimer.

The enzyme catalyses orotidine 5'-phosphate + H(+) = UMP + CO2. Its pathway is pyrimidine metabolism; UMP biosynthesis via de novo pathway; UMP from orotate: step 2/2. Its function is as follows. Catalyzes the decarboxylation of orotidine 5'-monophosphate (OMP) to uridine 5'-monophosphate (UMP). The sequence is that of Orotidine 5'-phosphate decarboxylase from Synechococcus sp. (strain CC9605).